The chain runs to 279 residues: Ribosomal RNA small subunit methyltransferase I (279 aa).

The protein belongs to the methyltransferase superfamily. RsmI family.

The protein localises to the cytoplasm. The catalysed reaction is cytidine(1402) in 16S rRNA + S-adenosyl-L-methionine = 2'-O-methylcytidine(1402) in 16S rRNA + S-adenosyl-L-homocysteine + H(+). Its function is as follows. Catalyzes the 2'-O-methylation of the ribose of cytidine 1402 (C1402) in 16S rRNA. The chain is Ribosomal RNA small subunit methyltransferase I from Synechocystis sp. (strain ATCC 27184 / PCC 6803 / Kazusa).